The following is a 127-amino-acid chain: Putative pre-16S rRNA nuclease (127 aa).

This sequence belongs to the YqgF nuclease family.

It localises to the cytoplasm. Could be a nuclease involved in processing of the 5'-end of pre-16S rRNA. The polypeptide is Putative pre-16S rRNA nuclease (Campylobacter jejuni subsp. jejuni serotype O:23/36 (strain 81-176)).